Here is a 612-residue protein sequence, read N- to C-terminus: MKLRNDLRNIAIIAHVDHGKTTLVDQLLHQAGTFRANEQVAERAMDSNDLERERGITILAKNTAINYKDTRINILDTPGHADFGGEVERIMKMVDGVVLVVDAYEGCMPQTRFVLKKALEQNLNPVVVVNKIDRDFARPEEVIDEVLDLFIELDANEEQLEFPVVYASAINGTASLDPKQQDENMEALYETIIKHVPAPVDNAEEPLQFQVALLDYNDYVGRIGIGRVFRGTMKVGQQVSLMKLDGTAKSFRVTKIFGFQGLKRVEIEEAKAGDLVAVSGMEDINVGETVCPVDHQDPLPVLRIDEPTLQMTFVVNNSPFAGREGKYVTARKIEERLQSQLQTDVSLRVEPTASPDAWVVSGRGELHLSILIENMRREGYELQVSKPEVIIKEIDGVRCEPVERVQIDVPEEHTGSVMESMGARKGEMVDMINNGNGQVRLIFTVPSRGLIGYSTEFLSLTRGFGILNHTFDSYQPMQAGQVGGRRQGVLVSMENGKATSYGIQGIEDRGVIFVEPGTEVYEGMIVGEHNRDNDLVVNVSKMKQQTNVRSATKDQTTTIKKARIMSLEESLEYLNEDEYCEVTPESIRLRKKILNKNEREKAAKKKKTAGLS.

The 196-residue stretch at 5 to 200 (NDLRNIAIIA…TIIKHVPAPV (196 aa)) folds into the tr-type G domain. Residues 17 to 22 (DHGKTT) and 130 to 133 (NKID) contribute to the GTP site.

The protein belongs to the TRAFAC class translation factor GTPase superfamily. Classic translation factor GTPase family. BipA subfamily. As to quaternary structure, monomer.

It is found in the cytoplasm. It catalyses the reaction GTP + H2O = GDP + phosphate + H(+). Its function is as follows. A 50S ribosomal subunit assembly protein with GTPase activity, required for 50S subunit assembly at low temperatures, may also play a role in translation. Binds GTP and analogs. Binds the 70S ribosome between the 30S and 50S subunits, in a similar position as ribosome-bound EF-G; it contacts a number of ribosomal proteins, both rRNAs and the A-site tRNA. The protein is Large ribosomal subunit assembly factor BipA of Bacillus subtilis (strain 168).